A 180-amino-acid chain; its full sequence is Negative modulator of initiation of replication (180 aa).

3 interaction with DNA regions span residues 86 to 87 (AV), 115 to 119 (RTRVY), and 149 to 155 (NTNTGRK).

Belongs to the SeqA family. Homodimer. Polymerizes to form helical filaments.

The protein localises to the cytoplasm. Negative regulator of replication initiation, which contributes to regulation of DNA replication and ensures that replication initiation occurs exactly once per chromosome per cell cycle. Binds to pairs of hemimethylated GATC sequences in the oriC region, thus preventing assembly of replication proteins and re-initiation at newly replicated origins. Repression is relieved when the region becomes fully methylated. In Salmonella typhimurium (strain LT2 / SGSC1412 / ATCC 700720), this protein is Negative modulator of initiation of replication.